We begin with the raw amino-acid sequence, 673 residues long: Acetate--CoA ligase [ADP-forming] II (673 aa).

An ATP-grasp domain is found at 9–45 (KALLEKYGIKTAKCIFCETEEQAVKAAKEIGFPVVMK). Position 35–46 (35–46 (AKEIGFPVVMKV)) interacts with ATP.

It in the N-terminal section; belongs to the acetate CoA ligase beta subunit family. The protein in the C-terminal section; belongs to the acetate CoA ligase alpha subunit family. Homodimer.

It carries out the reaction acetate + ATP + CoA = acetyl-CoA + ADP + phosphate. Activity requires divalent metal cations. Its function is as follows. Catalyzes the reversible conversion of a variety of acids to the corresponding acyl-CoA esters. Shows the highest activity with the aryl acids, indoleacetate and phenylacetate, as compared to acetate. In the reverse direction, phenylacetyl-CoA is the best substrate. Seems to be involved primarily in the degradation of aryl-CoA esters to the corresponding acids. Participates in the degradation of branched-chain amino acids via branched-chain-acyl-CoA esters. This chain is Acetate--CoA ligase [ADP-forming] II, found in Archaeoglobus fulgidus (strain ATCC 49558 / DSM 4304 / JCM 9628 / NBRC 100126 / VC-16).